Consider the following 510-residue polypeptide: 2,3-bisphosphoglycerate-independent phosphoglycerate mutase (510 aa).

Mn(2+) contacts are provided by aspartate 12 and serine 62. The active-site Phosphoserine intermediate is serine 62. Residues histidine 123, 153 to 154, arginine 185, arginine 191, 260 to 263, and lysine 335 each bind substrate; these read RD and RPDR. Residues aspartate 402, histidine 406, aspartate 443, histidine 444, and histidine 461 each coordinate Mn(2+).

Belongs to the BPG-independent phosphoglycerate mutase family. In terms of assembly, monomer. It depends on Mn(2+) as a cofactor.

The enzyme catalyses (2R)-2-phosphoglycerate = (2R)-3-phosphoglycerate. Its pathway is carbohydrate degradation; glycolysis; pyruvate from D-glyceraldehyde 3-phosphate: step 3/5. In terms of biological role, catalyzes the interconversion of 2-phosphoglycerate and 3-phosphoglycerate. This chain is 2,3-bisphosphoglycerate-independent phosphoglycerate mutase, found in Listeria welshimeri serovar 6b (strain ATCC 35897 / DSM 20650 / CCUG 15529 / CIP 8149 / NCTC 11857 / SLCC 5334 / V8).